Here is a 314-residue protein sequence, read N- to C-terminus: Lysophospholipase D GDPD1 (314 aa).

The Extracellular portion of the chain corresponds to 1–3; the sequence is MSS. The helical transmembrane segment at 4-24 threads the bilayer; the sequence is TAAFCLLSTLGGYLVTSFLLL. The Cytoplasmic portion of the chain corresponds to 25-195; the sequence is KYPALLHQRK…VDKCYKENSD (171 aa). The 270-residue stretch at 40-309 folds into the GP-PDE domain; sequence SRHISHRGGA…DYPTKLKDFL (270 aa). A divalent metal cation is bound by residues E72, D74, and H87. A helical transmembrane segment spans residues 196–216; the sequence is IPILFSLQRVLLILGLFFTGL. Residues 217–314 lie on the Extracellular side of the membrane; that stretch reads LPFVPIREQF…LKDFLNNFSA (98 aa).

Belongs to the glycerophosphoryl diester phosphodiesterase family. In terms of tissue distribution, widely expressed.

It is found in the cytoplasm. The protein resides in the membrane. The protein localises to the perinuclear region. Its subcellular location is the endoplasmic reticulum. It carries out the reaction 1-hexadecanoyl-sn-glycero-3-phosphocholine + H2O = 1-hexadecanoyl-sn-glycero-3-phosphate + choline + H(+). The enzyme catalyses 1-hexadecanoyl-sn-glycero-3-phosphoethanolamine + H2O = 1-hexadecanoyl-sn-glycero-3-phosphate + ethanolamine + H(+). It catalyses the reaction N-hexadecanoyl-sn-glycero-3-phosphoethanolamine + H2O = N-hexadecanoylethanolamine + sn-glycerol 3-phosphate + H(+). The catalysed reaction is N-(5Z,8Z,11Z,14Z-eicosatetraenoyl)-1-(9Z-octadecenoyl)-sn-glycero-3-phosphoethanolamine + H2O = N-(5Z,8Z,11Z,14Z-eicosatetraenoyl)-ethanolamine + 1-(9Z-octadecenoyl)-sn-glycero-3-phosphate + H(+). It carries out the reaction N,1-di-(9Z-octadecenoyl)-sn-glycero-3-phosphoethanolamine + H2O = N-(9Z-octadecenoyl) ethanolamine + 1-(9Z-octadecenoyl)-sn-glycero-3-phosphate + H(+). The enzyme catalyses N-hexadecanoyl-1-(9Z-octadecenoyl)-sn-glycero-3-phosphoethanolamine + H2O = N-hexadecanoylethanolamine + 1-(9Z-octadecenoyl)-sn-glycero-3-phosphate + H(+). It catalyses the reaction a 1-O-alkyl-sn-glycero-3-phosphocholine + H2O = a 1-O-alkyl-sn-glycero-3-phosphate + choline + H(+). The catalysed reaction is 1-O-hexadecyl-sn-glycero-3-phosphocholine + H2O = 1-O-hexadecyl-sn-glycero-3-phosphate + choline + H(+). It carries out the reaction 1-(9Z-octadecenoyl)-sn-glycero-3-phosphocholine + H2O = 1-(9Z-octadecenoyl)-sn-glycero-3-phosphate + choline + H(+). The enzyme catalyses N,1-dihexadecanoyl-sn-glycero-3-phosphoethanolamine + H2O = N-hexadecanoylethanolamine + 1-hexadecanoyl-sn-glycero-3-phosphate + H(+). It catalyses the reaction 1-O-(1Z-octadecenyl)-sn-glycero-3-phospho-(N-5Z,8Z,11Z,14Z-eicosatetraenoyl)-ethanolamine + H2O = 1-O-(1Z-octadecenyl)-sn-glycero-3-phosphate + N-(5Z,8Z,11Z,14Z-eicosatetraenoyl)-ethanolamine + H(+). The catalysed reaction is 1-O-(1Z-octadecenyl)-sn-glycero-3-phospho-(N-9Z-octadecenoyl)-ethanolamine + H2O = 1-O-(1Z-octadecenyl)-sn-glycero-3-phosphate + N-(9Z-octadecenoyl) ethanolamine + H(+). It carries out the reaction 1-O-(1Z-octadecenyl)-sn-glycero-3-phospho-N-hexadecanoyl-ethanolamine + H2O = 1-O-(1Z-octadecenyl)-sn-glycero-3-phosphate + N-hexadecanoylethanolamine + H(+). With respect to regulation, lysophospholipase D activity is increased by magnesium and manganese and inhibited by calcium in a concentration dependent manner. Loss of lysophospholipase D activity by addition of EDTA. Functionally, hydrolyzes lysoglycerophospholipids to produce lysophosphatidic acid (LPA) and the corresponding amines. Shows a preference for 1-O-alkyl-sn-glycero-3-phosphocholine (lyso-PAF), lysophosphatidylethanolamine (lyso-PE) and lysophosphatidylcholine (lyso-PC). May be involved in bioactive N-acylethanolamine biosynthesis from both N-acyl-lysoplasmenylethanolamin (N-acyl-lysoPlsEt) and N-acyl-lysophosphatidylethanolamin (N-acyl-lysoPE). In addition, hydrolyzes glycerophospho-N-acylethanolamine to N-acylethanolamine. Does not display glycerophosphodiester phosphodiesterase activity, since it cannot hydrolyze either glycerophosphoinositol or glycerophosphocholine. The chain is Lysophospholipase D GDPD1 from Mus musculus (Mouse).